A 219-amino-acid chain; its full sequence is uncharacterized protein (219 aa).

One can recognise an ACT domain in the interval 4 to 79 (GLRIIAENKI…YIIEIEEEES (76 aa)).

This is an uncharacterized protein from Archaeoglobus fulgidus (strain ATCC 49558 / DSM 4304 / JCM 9628 / NBRC 100126 / VC-16).